The following is a 288-amino-acid chain: METQLVISDVLFGNTEEKQKPLTVNELNTIQPVAFMRLGLFVPKPSRSSDYSPMIDVSELSSTFEFARLEGFTDIKITGERLDMDTDFKVWIGIVKAFSKYGISSNRIKLKFSEFAKDCGFPGKKLDKKLRAHIDESLRKIRGKSISFKRGKDSQSAYHTGLIKIAYFNADTDVVELEADERLWELYYFDYRVVLQLHAIKALPRLEVAQALYTFLASLPSNPAPISFERLRERLSLISQVKEQNRIIKKAITKLIDIGNLDASMVKKGQENYLIIHKRSPKLSVINE.

The protein belongs to the initiator RepB protein family.

In terms of biological role, this protein is essential for plasmid replication; it is involved in copy control functions. The chain is Protein RepA (repA) from Escherichia coli.